A 122-amino-acid polypeptide reads, in one-letter code: ATP-dependent Clp protease adapter protein ClpS (122 aa).

The segment at 1-33 is disordered; it reads MHAPSQIRLTFNQDHPEPHEHEDEGAGLAVQES. Positions 14 to 24 are enriched in basic and acidic residues; it reads DHPEPHEHEDE.

Belongs to the ClpS family. In terms of assembly, binds to the N-terminal domain of the chaperone ClpA.

In terms of biological role, involved in the modulation of the specificity of the ClpAP-mediated ATP-dependent protein degradation. This is ATP-dependent Clp protease adapter protein ClpS from Pseudomonas aeruginosa (strain ATCC 15692 / DSM 22644 / CIP 104116 / JCM 14847 / LMG 12228 / 1C / PRS 101 / PAO1).